Reading from the N-terminus, the 184-residue chain is ATP synthase subunit b (184 aa).

A helical membrane pass occupies residues 24-44 (ILVVVVGFALLMFIVIKFIVP).

This sequence belongs to the ATPase B chain family. F-type ATPases have 2 components, F(1) - the catalytic core - and F(0) - the membrane proton channel. F(1) has five subunits: alpha(3), beta(3), gamma(1), delta(1), epsilon(1). F(0) has three main subunits: a(1), b(2) and c(10-14). The alpha and beta chains form an alternating ring which encloses part of the gamma chain. F(1) is attached to F(0) by a central stalk formed by the gamma and epsilon chains, while a peripheral stalk is formed by the delta and b chains.

It is found in the cell membrane. Its function is as follows. F(1)F(0) ATP synthase produces ATP from ADP in the presence of a proton or sodium gradient. F-type ATPases consist of two structural domains, F(1) containing the extramembraneous catalytic core and F(0) containing the membrane proton channel, linked together by a central stalk and a peripheral stalk. During catalysis, ATP synthesis in the catalytic domain of F(1) is coupled via a rotary mechanism of the central stalk subunits to proton translocation. Functionally, component of the F(0) channel, it forms part of the peripheral stalk, linking F(1) to F(0). The protein is ATP synthase subunit b (atpF) of Micrococcus luteus (strain ATCC 4698 / DSM 20030 / JCM 1464 / CCM 169 / CCUG 5858 / IAM 1056 / NBRC 3333 / NCIMB 9278 / NCTC 2665 / VKM Ac-2230) (Micrococcus lysodeikticus).